The primary structure comprises 498 residues: ATP synthase subunit beta, chloroplastic (498 aa).

172 to 179 (GGAGVGKT) contributes to the ATP binding site.

This sequence belongs to the ATPase alpha/beta chains family. F-type ATPases have 2 components, CF(1) - the catalytic core - and CF(0) - the membrane proton channel. CF(1) has five subunits: alpha(3), beta(3), gamma(1), delta(1), epsilon(1). CF(0) has four main subunits: a(1), b(1), b'(1) and c(9-12).

It is found in the plastid. It localises to the chloroplast thylakoid membrane. The enzyme catalyses ATP + H2O + 4 H(+)(in) = ADP + phosphate + 5 H(+)(out). Produces ATP from ADP in the presence of a proton gradient across the membrane. The catalytic sites are hosted primarily by the beta subunits. This is ATP synthase subunit beta, chloroplastic from Elaeis oleifera (American oil palm).